The chain runs to 25 residues: Gastrin-releasing peptide (25 aa).

Residue M25 is modified to Methionine amide.

This sequence belongs to the bombesin/neuromedin-B/ranatensin family.

Its subcellular location is the secreted. The protein resides in the cytoplasmic vesicle. It is found in the secretory vesicle lumen. In terms of biological role, stimulates the release of gastrin and other gastrointestinal hormones. This Scyliorhinus canicula (Small-spotted catshark) protein is Gastrin-releasing peptide (grp).